The sequence spans 185 residues: Peroxynitrite isomerase (185 aa).

Residues 1-21 are disordered; the sequence is MHHPARELPFPDALRPGARPA. The GXWXGXG signature appears at 34–40; sequence GTWRGTG. His-171 lines the heme b pocket.

The protein belongs to the nitrobindin family. In terms of assembly, homodimer. Requires heme b as cofactor.

The enzyme catalyses peroxynitrite = nitrate. It functions in the pathway nitrogen metabolism. In terms of biological role, heme-binding protein able to scavenge peroxynitrite and to protect free L-tyrosine against peroxynitrite-mediated nitration, by acting as a peroxynitrite isomerase that converts peroxynitrite to nitrate. Therefore, this protein likely plays a role in peroxynitrite sensing and in the detoxification of reactive nitrogen and oxygen species (RNS and ROS, respectively). Is able to bind nitric oxide (NO) in vitro, but may act as a sensor of peroxynitrite levels in vivo. The polypeptide is Peroxynitrite isomerase (Streptomyces griseus subsp. griseus (strain JCM 4626 / CBS 651.72 / NBRC 13350 / KCC S-0626 / ISP 5235)).